A 292-amino-acid polypeptide reads, in one-letter code: Elongation factor Ts (292 aa).

The segment at 79–82 is involved in Mg(2+) ion dislocation from EF-Tu; it reads TDFV.

The protein belongs to the EF-Ts family.

It is found in the cytoplasm. Associates with the EF-Tu.GDP complex and induces the exchange of GDP to GTP. It remains bound to the aminoacyl-tRNA.EF-Tu.GTP complex up to the GTP hydrolysis stage on the ribosome. This chain is Elongation factor Ts, found in Staphylococcus haemolyticus (strain JCSC1435).